The sequence spans 2083 residues: Centriole proteome protein 16 (2083 aa).

The tract at residues 205 to 333 (DAPTMDFMPP…PAVPPPLSPS (129 aa)) is disordered. A compositionally biased stretch (low complexity) spans 227 to 245 (TAETADTAGAAGRKSLSGA). Residues 246 to 258 (SAGGAGPAKGGAK) show a composition bias toward gly residues. Low complexity-rich tracts occupy residues 259 to 274 (AGAA…SAGA) and 283 to 292 (GSTAGAATPG). Positions 302–315 (GEEDFEDDLSEDLD) are enriched in acidic residues. Residues 319–331 (PLPPSPAVPPPLS) are compositionally biased toward pro residues. WD repeat units follow at residues 482-523 (GHTA…CLAI), 526-569 (AHAS…AAGG), 579-620 (ATEY…GTSV), 689-726 (LHAA…YLLE), 728-767 (EHEG…YTTL), 770-809 (SHCG…QLYE), 812-853 (APGE…LLQE), 856-895 (QHRA…APAQ), 990-1029 (VSPL…ALRG), and 1041-1079 (GHPS…MQQE). Disordered regions lie at residues 1113–1141 (HTQA…VASA) and 1225–1276 (ALVV…PPPP). The span at 1263-1276 (VPLPPSPQPLPPPP) shows a compositional bias: pro residues. WD repeat units lie at residues 1326-1365 (GHNR…RAAQ), 1403-1444 (YHPL…LVAA), 1448-1486 (EQSP…LEQR), 1497-1539 (RDPR…QPPQ), 1651-1691 (GQAA…AEPA), 1736-1781 (DPLD…QLSW), and 1785-1824 (RHPA…LVSY). The segment at 1713-1743 (APAHTLRHPPSAAPSSAASSSPLDPLDPLPA) is disordered. Residues 1720–1743 (HPPSAAPSSAASSSPLDPLDPLPA) are compositionally biased toward low complexity. Residues 1832 to 1870 (GPTPHSPGGTGRRSPRGAASPPPAPPRPGTGPLQAMAVS) form a disordered region. The segment covering 1851-1860 (SPPPAPPRPG) has biased composition (pro residues). The WD 18 repeat unit spans residues 2035–2073 (GHAGAVAAASYTGDGGHAVTASGSVLMVWDAAQLLKGVT).

The protein belongs to the WD repeat WDR90/POC16 family.

Its subcellular location is the cytoplasm. It is found in the cytoskeleton. It localises to the microtubule organizing center. The protein localises to the centrosome. The protein resides in the centriole. Functionally, required for flagellum assembly and/or maintenance. The chain is Centriole proteome protein 16 from Chlamydomonas reinhardtii (Chlamydomonas smithii).